Consider the following 495-residue polypeptide: uncharacterized protein (495 aa).

Positions 16–74 constitute a TRAM domain; the sequence is SSKRGDLIELAVTALDEDGNGIGTHDGTNVHVIGALPDERVRARLTHVGKRHLHAEAVE. Residues Cys-88, Cys-94, Cys-97, and Cys-175 each contribute to the [4Fe-4S] cluster site. Residues Gln-299, Tyr-328, Glu-349, and Asn-397 each contribute to the S-adenosyl-L-methionine site. Cys-424 functions as the Nucleophile in the catalytic mechanism. Over residues 472–483 the composition is skewed to basic and acidic residues; sequence DRLESPAKERSR. The tract at residues 472–495 is disordered; sequence DRLESPAKERSRPRASHKAKGGAV. The segment covering 484-495 has biased composition (basic residues); sequence PRASHKAKGGAV.

This sequence belongs to the class I-like SAM-binding methyltransferase superfamily. RNA M5U methyltransferase family.

This is an uncharacterized protein from Geobacter sulfurreducens (strain ATCC 51573 / DSM 12127 / PCA).